Reading from the N-terminus, the 164-residue chain is Large ribosomal subunit protein uL10 (164 aa).

The protein belongs to the universal ribosomal protein uL10 family. As to quaternary structure, part of the ribosomal stalk of the 50S ribosomal subunit. The N-terminus interacts with L11 and the large rRNA to form the base of the stalk. The C-terminus forms an elongated spine to which L12 dimers bind in a sequential fashion forming a multimeric L10(L12)X complex.

In terms of biological role, forms part of the ribosomal stalk, playing a central role in the interaction of the ribosome with GTP-bound translation factors. The protein is Large ribosomal subunit protein uL10 of Helicobacter pylori (strain P12).